The primary structure comprises 1044 residues: Isoleucine--tRNA ligase (1044 aa).

The short motif at Pro-48–His-58 is the 'HIGH' region element. A 'KMSKS' region motif is present at residues Lys-594–Ser-598. Position 597 (Lys-597) interacts with ATP.

Belongs to the class-I aminoacyl-tRNA synthetase family. IleS type 2 subfamily. In terms of assembly, monomer. The cofactor is Zn(2+).

The protein resides in the cytoplasm. The enzyme catalyses tRNA(Ile) + L-isoleucine + ATP = L-isoleucyl-tRNA(Ile) + AMP + diphosphate. Catalyzes the attachment of isoleucine to tRNA(Ile). As IleRS can inadvertently accommodate and process structurally similar amino acids such as valine, to avoid such errors it has two additional distinct tRNA(Ile)-dependent editing activities. One activity is designated as 'pretransfer' editing and involves the hydrolysis of activated Val-AMP. The other activity is designated 'posttransfer' editing and involves deacylation of mischarged Val-tRNA(Ile). The sequence is that of Isoleucine--tRNA ligase from Borrelia duttonii (strain Ly).